The sequence spans 80 residues: MATNDQKIDNKSTVSNMLENPMFQTFSKKETEKPSLSEYMEQLTSEFGEELDNLRQKEIFDHNKLQLLIESLRAGHKIYE.

The span at 1–10 (MATNDQKIDN) shows a compositional bias: basic and acidic residues. Residues 1–35 (MATNDQKIDNKSTVSNMLENPMFQTFSKKETEKPS) form a disordered region. A compositionally biased stretch (polar residues) spans 11–26 (KSTVSNMLENPMFQTF).

It belongs to the RSA3 family. Associates with nucleolar pre-ribosomal particles.

It is found in the nucleus. Its subcellular location is the nucleolus. Required for efficient biogenesis of the 60S ribosomal subunit. This chain is Ribosome assembly protein 3 (rsa3), found in Schizosaccharomyces pombe (strain 972 / ATCC 24843) (Fission yeast).